The primary structure comprises 262 residues: Methanethiol S-methyltransferase (262 aa).

5 helical membrane-spanning segments follow: residues 22-42, 55-75, 100-120, 134-154, and 195-215; these read LYSL…IGFV, PGAS…LFAV, ATYV…WQPI, AVLT…TFLI, and GFLM…VFAL.

Belongs to the nurim family.

It is found in the membrane. The catalysed reaction is methanethiol + S-adenosyl-L-methionine = dimethyl sulfide + S-adenosyl-L-homocysteine + H(+). Functionally, catalyzes the methylation of methanethiol (MeSH) to yield dimethylsulphide (DMS). The chain is Methanethiol S-methyltransferase from Pseudomonas deceptionensis.